Reading from the N-terminus, the 214-residue chain is Guanylate kinase (214 aa).

Positions glycine 6 to arginine 192 constitute a Guanylate kinase-like domain. Position 13 to 20 (alanine 13 to threonine 20) interacts with ATP.

Belongs to the guanylate kinase family.

Its subcellular location is the cytoplasm. It carries out the reaction GMP + ATP = GDP + ADP. Its function is as follows. Essential for recycling GMP and indirectly, cGMP. The protein is Guanylate kinase of Pseudomonas savastanoi pv. phaseolicola (strain 1448A / Race 6) (Pseudomonas syringae pv. phaseolicola (strain 1448A / Race 6)).